A 639-amino-acid chain; its full sequence is Pheromone B alpha 1 receptor (639 aa).

Transmembrane regions (helical) follow at residues 8 to 28, 37 to 57, 70 to 90, 113 to 133, 163 to 183, 209 to 229, and 272 to 292; these read LFPI…PWHL, FFMM…VAWA, ISIR…LCII, ILVD…LQYI, VWPV…LLQF, MALA…VIVL, and LTRW…GFAE. Disordered stretches follow at residues 375–416, 490–516, 532–563, and 611–639; these read PRPM…SSPI, TVPH…SSSA, SADV…RLPS, and TTAG…RASV. Over residues 383–398 the composition is skewed to low complexity; sequence SSSGFSSSDSTRFGSS. Low complexity-rich tracts occupy residues 541–551 and 611–621; these read GSSAGGVASTS and TTAGAPATTTP.

This sequence belongs to the G-protein coupled receptor 4 family.

Its subcellular location is the membrane. Receptor for the BAP1 pheromone, a prenylated mating factor. Has a role in the initiation of B-regulated nuclear migration. In Schizophyllum commune (Split gill fungus), this protein is Pheromone B alpha 1 receptor (BAR1).